The chain runs to 352 residues: PhoH-like protein (352 aa).

Positions 1 to 21 (MTSRETRAADAAGARQADAQV) are disordered. Over residues 9-20 (ADAAGARQADAQ) the composition is skewed to low complexity. 150 to 157 (GPAGTGKT) contributes to the ATP binding site.

It belongs to the PhoH family.

It is found in the cytoplasm. This is PhoH-like protein from Mycobacterium bovis (strain ATCC BAA-935 / AF2122/97).